Reading from the N-terminus, the 707-residue chain is Choline transporter-like protein 4 (707 aa).

Residues 1 to 32 (MGEKQDPDKAYGKPAKYDPSFRGPIRNRSCTD) lie on the Cytoplasmic side of the membrane. A helical transmembrane segment spans residues 33–53 (IICCVLFFVFILGYIAVGLVA). Residues 54 to 226 (WVYGDPQQVL…KIFEDFAQSW (173 aa)) lie on the Extracellular side of the membrane. N-linked (GlcNAc...) asparagine glycans are attached at residues N67, N142, N184, and N195. The chain crosses the membrane as a helical span at residues 227–247 (YWILAALGVALVLSLLFVLLL). Topologically, residues 248-249 (RL) are cytoplasmic. The chain crosses the membrane as a helical span at residues 250 to 270 (VAGPLVFVLIIGVLGVLAYGI). Over 271–306 (YHCWNEYRLLRDKGASISQLGFTTNLSAYSSVQETW) the chain is Extracellular. An N-linked (GlcNAc...) asparagine glycan is attached at N295. A helical transmembrane segment spans residues 307-327 (LAALILLAVLEGILLLMLIFL). At 328-355 (RQRIRIAIALLEEASRAVGQMMSTLFYP) the chain is on the cytoplasmic side. The chain crosses the membrane as a helical span at residues 356 to 376 (LVTFVLLLVCIAYWAMTALYL). The Extracellular portion of the chain corresponds to 377 to 452 (ATSGQPQYVL…GVLGLFWTIN (76 aa)). 3 N-linked (GlcNAc...) asparagine glycosylation sites follow: N390, N402, and N413. Residues 453 to 473 (WVLALGQCVLAGAFASFYWAF) traverse the membrane as a helical segment. Over 474-498 (HKPRDIPTFPLSSAFIRTLRYHTGS) the chain is Cytoplasmic. Residues 499-519 (LAFGALILTLVQIARAILEYI) traverse the membrane as a helical segment. The Extracellular portion of the chain corresponds to 520–557 (DHKLRGAQNPVARCIMCCFKCCLWCLEKFIKFLNRNAY). Residues 558 to 578 (IMIAIYGKNFCVSAKNAFMLL) form a helical membrane-spanning segment. The Cytoplasmic segment spans residues 579 to 594 (MRNIVRVVVLDKVTDL). A helical transmembrane segment spans residues 595 to 615 (LLFFGKLLVVGGVGVLSFFFF). Residues 616 to 635 (TGRIQGLGKDFESPQLNYYW) are Extracellular-facing. The chain crosses the membrane as a helical span at residues 636 to 656 (LPIMTSIMGAYVIASGFFSVF). The Cytoplasmic portion of the chain corresponds to 657 to 707 (GMCVDTLFLCFLEDLERNDGSLDRPYYMSKALLKILGKKNEVPSGDKKRKK).

This sequence belongs to the CTL (choline transporter-like) family. In terms of processing, N-glycosylated; N-glycosylation of Asn-677 and Asn-390 is required for a proper thiamine pyrophosphate uptake.

The protein localises to the membrane. It localises to the apical cell membrane. The enzyme catalyses choline(out) + n H(+)(in) = choline(in) + n H(+)(out). The catalysed reaction is thiamine diphosphate(out) = thiamine diphosphate(in). Functionally, choline transporter that plays a role in the choline-acetylcholine system and is required to the efferent innervation of hair cells in the olivocochlear bundle for the maintenance of physiological function of outer hair cells and the protection of hair cells from acoustic injury. Also described as a thiamine pyrophosphate transporter in colon, may mediate the absorption of microbiota-generated thiamine pyrophosphate and contribute to host thiamine (vitamin B1) homeostasis. In Sus scrofa (Pig), this protein is Choline transporter-like protein 4.